Reading from the N-terminus, the 132-residue chain is NADPH-dependent 7-cyano-7-deazaguanine reductase (132 aa).

Residue C34 is the Thioimide intermediate of the active site. D41 acts as the Proton donor in catalysis. Residues 56–58 (IEL) and 75–76 (HE) each bind substrate.

Belongs to the GTP cyclohydrolase I family. QueF type 1 subfamily.

The protein localises to the cytoplasm. The catalysed reaction is 7-aminomethyl-7-carbaguanine + 2 NADP(+) = 7-cyano-7-deazaguanine + 2 NADPH + 3 H(+). It functions in the pathway tRNA modification; tRNA-queuosine biosynthesis. Its function is as follows. Catalyzes the NADPH-dependent reduction of 7-cyano-7-deazaguanine (preQ0) to 7-aminomethyl-7-deazaguanine (preQ1). In Vesicomyosocius okutanii subsp. Calyptogena okutanii (strain HA), this protein is NADPH-dependent 7-cyano-7-deazaguanine reductase.